We begin with the raw amino-acid sequence, 753 residues long: Centromere protein I (753 aa).

Positions 1–15 (MQRRQSSKHSKRPLQ) are enriched in basic residues. Residues 1 to 54 (MQRRQSSKHSKRPLQVHHSNQTDLSAWRKGGTVDTEKSAQNRQSLSDQKNDNEQ) form a disordered region.

Belongs to the CENP-I/CTF3 family. In terms of assembly, component of the CENPA-HI complex, at least composed of CENPH, CENPI, CENPK, CENPL, CENPM, CENPO and CENPP.

It is found in the nucleus. The protein localises to the chromosome. It localises to the centromere. In terms of biological role, component of the CENPA-HI complex, a centromeric complex involved in assembly of kinetochore proteins, mitotic progression and chromosome segregation. Required for the localization of CENPC but not CENPA to the centromere. It however may be involved in incorporation of newly synthesized CENPA into centromeres via its interaction with the CENPA-NAC complex. This chain is Centromere protein I (CENPI), found in Gallus gallus (Chicken).